The primary structure comprises 586 residues: MDEVRRRPPKHIVRKDHDGEVLNSFSHGHHLPPLKPSDYSLPLSLYLANALVFSLFFSVAYFLLHRWREKIRKSTPLHIVTFPEIAALICLVASVIYLLGFFGIGFVHSFSRASTDSWDVEEYDDDNIIIKEDTRPTGACAAPSLDCSLSLPTKIHAPIVSTTTTSTLSDDDEQIIKSVVSGSIPSYSLESKLGNCKRAALIRRETLQRMSGRSLEGLPLDGFDYESILGQCCEMAIGYVQIPVGIAGPLLLDGKEYTVPMATTEGCLVASANRGCKAIYASGGATSVLLRDGMTRAPVVRFPTAKRAADLKFFMEDPDNFDTIAVVFNKSSRFARLQSVQCAIAGKNLYMRFSCSTGDAMGMNMVSKAVQNVIDYLQNDFPDMDVIGLTGNFCADKKAAAVNWIEGRGKSVVCEAIIKEEVVKKVLKTNVAALVELNMIKNLTGSAVAGSLGGFNAHASNMVTAVYIATGQDPAQNVESSHCITMMEAVNDGKDLHISVSMPSIELGTVGGGTQLASQSACLNLLGVKGASKDSPGSNSRLLATIVAGSVLAGELSLMSAIAAGQLVNSHMKYNRSAKDVSKITF.

2 helical membrane passes run 36 to 59 and 87 to 107; these read PSDYSLPLSLYLANALVFSLFFSV and ALICLVASVIYLLGFFGIGFV. The tract at residues 108-170 is linker; it reads HSFSRASTDS…STTTTSTLSD (63 aa). Catalytic regions lie at residues 171 to 586 and 172 to 586; these read DDEQ…KITF and DEQI…KITF. Active-site charge relay system residues include Glu-265, Lys-397, and Asp-473. The active-site Proton donor is the His-571. Asn-575 carries an N-linked (GlcNAc...) asparagine glycan.

The protein belongs to the HMG-CoA reductase family.

The protein localises to the endoplasmic reticulum membrane. It localises to the mitochondrion membrane. Its subcellular location is the plastid membrane. It catalyses the reaction (R)-mevalonate + 2 NADP(+) + CoA = (3S)-3-hydroxy-3-methylglutaryl-CoA + 2 NADPH + 2 H(+). The protein operates within metabolic intermediate biosynthesis; (R)-mevalonate biosynthesis; (R)-mevalonate from acetyl-CoA: step 3/3. Its function is as follows. Catalyzes the synthesis of mevalonate. The specific precursor of all isoprenoid compounds present in plants. The chain is 3-hydroxy-3-methylglutaryl-coenzyme A reductase 3 (HMGR3) from Hevea brasiliensis (Para rubber tree).